The following is a 92-amino-acid chain: Small ribosomal subunit protein uS19c (92 aa).

It belongs to the universal ribosomal protein uS19 family.

Its subcellular location is the plastid. The protein localises to the chloroplast. In terms of biological role, protein S19 forms a complex with S13 that binds strongly to the 16S ribosomal RNA. In Manihot esculenta (Cassava), this protein is Small ribosomal subunit protein uS19c.